Reading from the N-terminus, the 2327-residue chain is Kielin/chordin-like protein (2327 aa).

Residues 1-19 (MNTLLWTILLPLLFSFCVC) form the signal peptide. A disordered region spans residues 250 to 294 (LPLPYSLSGERQMEDEEIQREPRAPDLSDTDHYQQQQSEVPAQLL). A compositionally biased stretch (basic and acidic residues) spans 268-281 (QREPRAPDLSDTDH). The stretch at 291–332 (AQLLAKDDRLQRLEEAVKGLTNMIDMIKSQNADLQARVIALE) forms a coiled coil. 28 VWFC domains span residues 339–400 (STCV…SVGP), 401–438 (CMSC…PLCA), 439–493 (TGCS…AKCQ), 494–553 (QGCE…PSCP), 554–610 (VCEL…LDCS), 611–669 (ACEM…SQCQ), 670–728 (SCMD…PMCD), 729–786 (GCLY…PRCE), 787–847 (GCEY…PSCD), 848–907 (VCDF…PVCK), 908–966 (VCVQ…PVCD), 967–1025 (SCSY…AKCP), 1026–1083 (DCRY…NNCN), 1084–1142 (GCNY…PQCP), 1146–1203 (ADCP…RSCD), 1204–1260 (GCLM…KECQ), 1261–1319 (DCQY…PVCD), 1321–1377 (CSYN…CPIC), 1378–1439 (QGCH…DGCN), 1440–1495 (YSGR…PRCT), 1496–1555 (GICK…PVCD), 1556–1614 (RCFY…RECP), 1615–1673 (VCRY…PRCR), 1674–1731 (GCVY…PVCA), 1732–1799 (DCIS…SSCA), 1800–1860 (QALS…PVCN), 1861–1924 (ECVV…HECQ), and 1928–1988 (VSCW…PHCI). Positions 1992-2168 (ATCIAFGDPH…SSNDSSSSCW (177 aa)) constitute a VWFD domain. Intrachain disulfides connect cysteine 1994–cysteine 2126 and cysteine 2016–cysteine 2167. Positions 2259–2319 (CPHDRGYVFD…ESHCIPPESC (61 aa)) constitute a TIL domain.

The protein resides in the secreted. May be a signaling molecule that mediates inductive activities of the embryonic midline. Able to dorsalize mesoderm. The sequence is that of Kielin/chordin-like protein (kcp) from Xenopus laevis (African clawed frog).